A 60-amino-acid chain; its full sequence is Small ribosomal subunit protein uS10 (60 aa).

It belongs to the universal ribosomal protein uS10 family.

The chain is Small ribosomal subunit protein uS10 (RPS20) from Zea mays (Maize).